A 74-amino-acid chain; its full sequence is Apolipoprotein C-I, acidic form (74 aa).

The first 26 residues, 1 to 26 (MRLFLSLPVLVVVLSMVLEGPTPAQG), serve as a signal peptide directing secretion.

Belongs to the apolipoprotein C1 family.

Its subcellular location is the secreted. This chain is Apolipoprotein C-I, acidic form (APOC1A), found in Colobus guereza (Mantled guereza).